The following is a 173-amino-acid chain: C-type lectin mosGCTL-7 (173 aa).

An N-terminal signal peptide occupies residues 1–24 (MVVGWSLLGWALSWLAVATVVVSA). The region spanning 51 to 167 (NWFKATEYCH…CWDEYYFVCE (117 aa)) is the C-type lectin domain. Disulfide bonds link C59–C166 and C139–C158. N-linked (GlcNAc...) asparagine glycosylation is found at N119 and N144.

As to quaternary structure, interacts with putative receptor-type tyrosine-protein phosphatase mosPTP-1; the interaction may mediate the recruitment of Japanese encephalitis virus particles in complex with C-type lectin mosGCTL-7 to the cell surface.

The protein resides in the secreted. Carbohydrate-binding protein. Functionally, (Microbial infection) Facilitates Japanese encephalitis virus infection in mosquitoes. This is C-type lectin mosGCTL-7 from Culex quinquefasciatus (Southern house mosquito).